The chain runs to 492 residues: Putative heme-binding protein VNG_2021C (492 aa).

Position 177 (histidine 177) interacts with heme. The tract at residues 253-301 (AGERVPAPEGGADAHGEGERTHHHGDSDHHDGDDGEQHHHSTGDEADDG) is disordered. The span at 264–301 (ADAHGEGERTHHHGDSDHHDGDDGEQHHHSTGDEADDG) shows a compositional bias: basic and acidic residues. In terms of domain architecture, ABM spans 402 to 490 (GTMGMFYETK…VLADRPRHVF (89 aa)).

It in the N-terminal section; belongs to the ChdC family.

This is Putative heme-binding protein VNG_2021C from Halobacterium salinarum (strain ATCC 700922 / JCM 11081 / NRC-1) (Halobacterium halobium).